The sequence spans 436 residues: Aminotransferase tdiD (436 aa).

Substrate is bound by residues Arg30, Tyr86, Tyr148, and Asn202. An N6-(pyridoxal phosphate)lysine modification is found at Lys270. Arg407 lines the substrate pocket.

It belongs to the class-I pyridoxal-phosphate-dependent aminotransferase family. Pyridoxal 5'-phosphate serves as cofactor.

It carries out the reaction 3-phenylpyruvate + L-tryptophan = indole-3-pyruvate + L-phenylalanine. The protein operates within secondary metabolite biosynthesis. In terms of biological role, aminotransferase; part of the gene cluster that mediates the biosynthesis of terrequinone A, an antitumor agent. The first step in the biosynthetic pathway for terrequinone A is formation of indole pyruvic acid (IPA) from L-tryptophan by the aminotransferase tdiD. The nonribosomal peptide synthase tdiA then immediately converts unstable IPA to didemethylasterriquinone D (DDAQ D), via condensation of 2 IPA molecules. The symmetric connectivity of the 2 IPA molecules is thought to arise by head-to-tail dual Claisen condensations facilitated by the TE domain. TdiB then catalyzes reverse prenylation by transferring dimethylallyl diphosphate to carbon atom 2' of DDAQ D, to yield asterriquinone C-1. Finally, tdiC and tdiE enzymes robustly convert asterriquinone C-1 to terrequinone A via a transformation involving regular prenylation at carbon atom 5, which requires elimination of the hydroxy group on C-5. The protein is Aminotransferase tdiD of Emericella nidulans (strain FGSC A4 / ATCC 38163 / CBS 112.46 / NRRL 194 / M139) (Aspergillus nidulans).